The chain runs to 155 residues: Ribonuclease H (155 aa).

Residues 7–150 (AQNAVDLYTD…ADKLACKGRD (144 aa)) enclose the RNase H type-1 domain. Positions 16, 54, 77, and 142 each coordinate Mg(2+).

It belongs to the RNase H family. In terms of assembly, monomer. It depends on Mg(2+) as a cofactor.

It localises to the cytoplasm. The enzyme catalyses Endonucleolytic cleavage to 5'-phosphomonoester.. Endonuclease that specifically degrades the RNA of RNA-DNA hybrids. This chain is Ribonuclease H, found in Saccharopolyspora erythraea (strain ATCC 11635 / DSM 40517 / JCM 4748 / NBRC 13426 / NCIMB 8594 / NRRL 2338).